The following is a 343-amino-acid chain: MVVVGIVGASGYTGGELLRLLARHPEVEEVRYATSRRLEGKPVWKVHPNLRRDYPDLEFSDPDPVEIGEDCDVVFTAVPHTAAMELVPDLLEGGAVVIDLSADFRFDDVDVYEEWYGVEHAAPELNDEAVYGLPELHRDEIRRTDLIANPGCYPTGAILAAAPLVEEGLVDVVIFDSKSGTSGAGAKPSEVTHHPECAEDLTPYNPTDHRHLPEIRQELGKLGDVEVHFTPHLAPLVRGIETTAHGLGDVEIEPKELRELYVEYYDGEPFIRVCEVGEAPRLWAVRGTNYCDVGVFAVGDGRVVVASAIDNLTKGASGQAIQNMNVRFGFEETAGLEEPGYHP.

Residue Cys-152 is part of the active site.

It belongs to the NAGSA dehydrogenase family. Type 1 subfamily.

Its subcellular location is the cytoplasm. It carries out the reaction N-acetyl-L-glutamate 5-semialdehyde + phosphate + NADP(+) = N-acetyl-L-glutamyl 5-phosphate + NADPH + H(+). It participates in amino-acid biosynthesis; L-arginine biosynthesis; N(2)-acetyl-L-ornithine from L-glutamate: step 3/4. Functionally, catalyzes the NADPH-dependent reduction of N-acetyl-5-glutamyl phosphate to yield N-acetyl-L-glutamate 5-semialdehyde. This chain is N-acetyl-gamma-glutamyl-phosphate reductase, found in Methanopyrus kandleri (strain AV19 / DSM 6324 / JCM 9639 / NBRC 100938).